Consider the following 231-residue polypeptide: Caspase-like protein (231 aa).

This sequence belongs to the peptidase C14A family.

In Trichoplusia ni ascovirus 2c (TnAV-2c), this protein is Caspase-like protein.